Reading from the N-terminus, the 550-residue chain is Nucleoside hydrolase 4 (550 aa).

It belongs to the IUNH family.

It localises to the cytoplasm. May be involved in the degradation of nucleosides. The chain is Nucleoside hydrolase 4 from Arabidopsis thaliana (Mouse-ear cress).